An 841-amino-acid polypeptide reads, in one-letter code: Auxin response factor 24 (841 aa).

The segment at 109–140 (LPEKQQDGNGSGNGNVSKDKVEEEEVVPPAAT) is disordered. Positions 148–250 (FCKTLTASDT…ELRVGVRRAM (103 aa)) form a DNA-binding region, TF-B3. Disordered regions lie at residues 366-397 (PRPD…KRAR), 663-715 (QDAL…SRSC), and 804-841 (GALN…SENC). Basic and acidic residues predominate over residues 684-695 (AQHDSAREKHQS). 2 stretches are compositionally biased toward polar residues: residues 701 to 713 (KNIQ…GSSR) and 830 to 841 (GLSTPSLNSENC). The PB1 domain maps to 713–797 (RSCKKVHKQG…HKIFIYTREE (85 aa)).

The protein belongs to the ARF family. Homodimers and heterodimers. Expressed in roots, culms, leaves and young panicles.

It is found in the nucleus. Functionally, auxin response factors (ARFs) are transcriptional factors that bind specifically to the DNA sequence 5'-TGTCTC-3' found in the auxin-responsive promoter elements (AuxREs). The chain is Auxin response factor 24 (ARF24) from Oryza sativa subsp. japonica (Rice).